Reading from the N-terminus, the 788-residue chain is Integrin beta-6 (788 aa).

The first 21 residues, 1–21 (MGIELLCLFFLCLGRNDHVQG), serve as a signal peptide directing secretion. The PSI domain maps to 22–71 (GCAVGGAETCEDCLLIGPQCAWCSQENFTHLSGVGERCDTPANLLAKGCQ). Topologically, residues 22–709 (GCAVGGAETC…KDCPKPPNIP (688 aa)) are extracellular. 19 cysteine pairs are disulfide-bonded: C23–C41, C31–C454, C34–C59, C44–C70, C197–C204, C252–C293, C394–C406, C426–C452, C456–C476, C467–C479, C481–C490, C492–C519, C502–C517, C511–C522, C524–C537, C539–C560, C544–C558, C552–C563, and C565–C574. N48 and N97 each carry an N-linked (GlcNAc...) asparagine glycan. One can recognise a VWFA domain in the interval 131-371 (YPVDLYYLMD…QLIISAYEEL (241 aa)). 3 residues coordinate Mg(2+): D140, S142, and S144. Residues S144, D147, D148, and E179 each contribute to the Ca(2+) site. The Ca(2+) site is built by N235, D237, P239, and E240. E240 serves as a coordination point for Mg(2+). N260 carries an N-linked (GlcNAc...) asparagine glycan. Ca(2+) contacts are provided by D271 and K355. The N-linked (GlcNAc...) asparagine glycan is linked to N387. A glycan (N-linked (GlcNAc...) asparagine) is linked at N418. 4 consecutive I-EGF domains span residues 456 to 491 (CQKE…HHCE), 492 to 538 (CGED…PYCQ), 539 to 575 (CDNF…EYCN), and 576 to 615 (CTTS…PTCE). N-linked (GlcNAc...) asparagine glycosylation is found at N463 and N471. A glycan (N-linked (GlcNAc...) asparagine) is linked at N541. N575 carries N-linked (GlcNAc...) asparagine glycosylation. Cystine bridges form between C576/C599, C583/C597, C591/C602, C604/C614, C617/C620, C624/C670, C630/C649, C633/C645, and C678/C702. Residues 710 to 730 (MIMLGVSLAILLIGVVLLCIW) traverse the membrane as a helical segment. Residues 731-758 (KLLVSFHDRKEVAKFEAERSKAKWQTGT) are interaction with HAX1. At 731 to 788 (KLLVSFHDRKEVAKFEAERSKAKWQTGTNPLYRGSTSTFKNVTYKHKEKQKVDLSTDG) the chain is on the cytoplasmic side.

The protein belongs to the integrin beta chain family. As to quaternary structure, heterodimer of an alpha and a beta subunit. Interacts with FLNB. Interacts with HAX1. ITGAV:ITGB6 interacts with FBN1. ITGAV:ITGB6 interacts with TGFB1.

The protein localises to the cell membrane. It localises to the cell junction. It is found in the focal adhesion. Its function is as follows. Integrin alpha-V:beta-6 (ITGAV:ITGB6) is a receptor for fibronectin and cytotactin. It recognizes the sequence R-G-D in its ligands. ITGAV:ITGB6 acts as a receptor for fibrillin-1 (FBN1) and mediates R-G-D-dependent cell adhesion to FBN1. Integrin alpha-V:beta-6 (ITGAV:ITGB6) mediates R-G-D-dependent release of transforming growth factor beta-1 (TGF-beta-1) from regulatory Latency-associated peptide (LAP), thereby playing a key role in TGF-beta-1 activation. This is Integrin beta-6 (ITGB6) from Bos taurus (Bovine).